Reading from the N-terminus, the 594-residue chain is Neopentalenolactone D synthase (594 aa).

FAD is bound by residues 64–65, 86–87, 94–95, 106–107, Y112, V156, and M494; these read IG, DK, TW, and DV.

The protein belongs to the FAD-binding monooxygenase family. FAD is required as a cofactor.

The catalysed reaction is 1-deoxy-11-oxopentalenate + NADPH + O2 + H(+) = neopentalenolactone D + NADP(+) + H2O. Its pathway is antibiotic biosynthesis; neopentalenolactone biosynthesis. Catalyzes the flavin-dependent Baeyer-Villiger oxidation of 1-deoxy-11-oxopentalenic acid to neopentalenolactone D in the biosynthesis of neopentalenolactone antibiotic. The chain is Neopentalenolactone D synthase (ptlE) from Streptomyces avermitilis (strain ATCC 31267 / DSM 46492 / JCM 5070 / NBRC 14893 / NCIMB 12804 / NRRL 8165 / MA-4680).